The sequence spans 103 residues: Putative double-stranded DNA mimic protein HD_0986 (103 aa).

It belongs to the putative dsDNA mimic protein family.

May act as a double-stranded DNA (dsDNA) mimic. Probably regulates the activity of a dsDNA-binding protein. The protein is Putative double-stranded DNA mimic protein HD_0986 of Haemophilus ducreyi (strain 35000HP / ATCC 700724).